A 1325-amino-acid chain; its full sequence is ATP-binding cassette sub-family C member 4 (1325 aa).

The next 6 helical transmembrane spans lie at 93-113, 136-156, 205-225, 227-247, 322-342, and 351-371; these read LILG…PLFL, GYAA…HLYF, FDQV…AIAV, VLLW…LVIL, ASFF…YVLL, and VFVA…FFPS. Positions 93–377 constitute an ABC transmembrane type-1 1 domain; the sequence is LILGIFTLIE…FFPSAIERGS (285 aa). In terms of domain architecture, ABC transporter 1 spans 410–633; sequence VHVQDFTAFW…GVDFGSLLKK (224 aa). 445 to 452 serves as a coordination point for ATP; sequence GPVGAGKS. Phosphothreonine occurs at positions 646 and 648. Polar residues predominate over residues 657–667; the sequence is ASIWSQQSSRP. The tract at residues 657-690 is disordered; the sequence is ASIWSQQSSRPSLKDGAPEGQDAENTQAVQPEES. 2 positions are modified to phosphoserine: Ser-664 and Ser-668. 5 consecutive transmembrane segments (helical) span residues 710–730, 761–781, 849–869, 954–974, and 977–997; these read SWFF…FYVL, LSWY…FGIA, LVVS…IPLV, AICA…AKTL, and GQVG…QWSV. The region spanning 714–1005 is the ABC transmembrane type-1 2 domain; that stretch reads IIFLVLLNMV…SVRQSAEVEN (292 aa). An ABC transporter 2 domain is found at 1041-1274; that stretch reads IVFDNVNFTY…PESLFYKMVQ (234 aa). Residue 1075–1082 coordinates ATP; sequence GRTGAGKS. Residues 1322 to 1325 carry the PDZ-binding motif; it reads ETAL.

As to quaternary structure, interacts (via PDZ-binding motif) with SNX27 (via PDZ domain); this interaction accelerates MRP4 internalization. The cofactor is Mg(2+). Post-translationally, N-glycosylated; leading to substrate-selective effects on its transport activity.

It is found in the basolateral cell membrane. Its subcellular location is the apical cell membrane. It catalyses the reaction ATP + H2O + xenobioticSide 1 = ADP + phosphate + xenobioticSide 2.. The enzyme catalyses an S-substituted glutathione(in) + ATP + H2O = an S-substituted glutathione(out) + ADP + phosphate + H(+). The catalysed reaction is 17beta-estradiol 17-O-(beta-D-glucuronate)(in) + ATP + H2O = 17beta-estradiol 17-O-(beta-D-glucuronate)(out) + ADP + phosphate + H(+). It carries out the reaction dehydroepiandrosterone 3-sulfate(in) + ATP + H2O = dehydroepiandrosterone 3-sulfate(out) + ADP + phosphate + H(+). It catalyses the reaction leukotriene C4(in) + ATP + H2O = leukotriene C4(out) + ADP + phosphate + H(+). The enzyme catalyses leukotriene B4(in) + ATP + H2O = leukotriene B4(out) + ADP + phosphate + H(+). The catalysed reaction is urate(in) + ATP + H2O = urate(out) + ADP + phosphate + H(+). It carries out the reaction 3',5'-cyclic GMP(in) + ATP + H2O = 3',5'-cyclic GMP(out) + ADP + phosphate + H(+). It catalyses the reaction 3',5'-cyclic AMP(in) + ATP + H2O = 3',5'-cyclic AMP(out) + ADP + phosphate + H(+). The enzyme catalyses prostaglandin E2(in) + ATP + H2O = prostaglandin E2(out) + ADP + phosphate + H(+). The catalysed reaction is prostaglandin E1(in) + ATP + H2O = prostaglandin E1(out) + ADP + phosphate + H(+). It carries out the reaction glycodeoxycholate(in) + glutathione(in) + ATP + H2O = glycodeoxycholate(out) + glutathione(out) + ADP + phosphate + H(+). It catalyses the reaction cholate(in) + glutathione(in) + ATP + H2O = cholate(out) + glutathione(out) + ADP + phosphate + H(+). The enzyme catalyses glycocholate(in) + glutathione(in) + ATP + H2O = glycocholate(out) + glutathione(out) + ADP + phosphate + H(+). The catalysed reaction is taurocholate(in) + glutathione(in) + ATP + H2O = taurocholate(out) + glutathione(out) + ADP + phosphate + H(+). It carries out the reaction glycochenodeoxycholate(in) + glutathione(in) + ATP + H2O = glycochenodeoxycholate(out) + glutathione(out) + ADP + phosphate + H(+). It catalyses the reaction taurochenodeoxycholate(in) + glutathione(in) + ATP + H2O = taurochenodeoxycholate(out) + glutathione(out) + ADP + phosphate + H(+). The enzyme catalyses glycoursodeoxycholate(in) + glutathione(in) + ATP + H2O = glycoursodeoxycholate(out) + glutathione(out) + ADP + phosphate + H(+). The catalysed reaction is tauroursodeoxycholate(in) + glutathione(in) + ATP + H2O = tauroursodeoxycholate(out) + glutathione(out) + ADP + phosphate + H(+). In terms of biological role, ATP-dependent transporter of the ATP-binding cassette (ABC) family that actively extrudes physiological compounds and xenobiotics from cells. Transports a range of endogenous molecules that have a key role in cellular communication and signaling, including cyclic nucleotides such as cyclic AMP (cAMP) and cyclic GMP (cGMP), bile acids, steroid conjugates, urate, and prostaglandins. Also mediates the ATP-dependent efflux of glutathione conjugates such as leukotriene C4 (LTC4) and leukotriene B4 (LTB4). The presence of GSH is necessary for the ATP-dependent transport of LTB4, whereas GSH is not required for the transport of LTC4. Mediates the cotransport of bile acids with reduced glutathione (GSH). Transports a wide range of drugs and their metabolites, including anticancer, antiviral and antibiotics molecules. Confers resistance to anticancer agents. This is ATP-binding cassette sub-family C member 4 from Mus musculus (Mouse).